The primary structure comprises 272 residues: Hydroxyethylthiazole kinase (272 aa).

Residue M62 coordinates substrate. The ATP site is built by R138 and T183. G210 provides a ligand contact to substrate.

This sequence belongs to the Thz kinase family. Mg(2+) serves as cofactor.

The enzyme catalyses 5-(2-hydroxyethyl)-4-methylthiazole + ATP = 4-methyl-5-(2-phosphooxyethyl)-thiazole + ADP + H(+). Its pathway is cofactor biosynthesis; thiamine diphosphate biosynthesis; 4-methyl-5-(2-phosphoethyl)-thiazole from 5-(2-hydroxyethyl)-4-methylthiazole: step 1/1. Its function is as follows. Catalyzes the phosphorylation of the hydroxyl group of 4-methyl-5-beta-hydroxyethylthiazole (THZ). In Dichelobacter nodosus (strain VCS1703A), this protein is Hydroxyethylthiazole kinase.